We begin with the raw amino-acid sequence, 562 residues long: MDYKTQFAESLSNIFTNELTQQQILDLIETPKQDEFGDAAFPCFSLAKQYKKSPAIIAKEVAEKLSDPFFTKVEAVGPYVNVFFNRDTVSDAVLKTILAEKEEYGKNYFGCEKTVVIDYSSPNIAKPFSMGHLRSTMIGNSLKHIAEKCGYEVVGINYIGDWGTQFGKLITAYKKWGNEAVVKEDPIRELFKLYVQFHEEVKDDEELEEEGRAWFKKLEEGDEEAVELWNWFRHESLKEFSRIYELLGVEFTNFQGEAFYNNLMEDFIGILEEHDLLEESEGALVVNLEEEGMPPCLIRKSDGATIYATRDLTAALYRQNTFGFDKALYVVGPEQSLHFNQFFTVLKKLGYTWVDGMEHVPFGFILKDGKKMSTRKGRVILLEEVLEEAIELAKQNIEEKNPNLKQKEEVAKQVGAGAVIFHDLKNERMHNIEFSLENMLKFEGETGPYVQYTHARACSILRKESVEFETCTFALKDDHSWSVVKLLNKFPQVIEIAFNKNEPSVISKYVLDVAQSFNKYYGNVRILEESEEKDSRLALVYAVTVVLKEGLRLLGVEAPEEM.

Residues 122-132 (PNIAKPFSMGH) carry the 'HIGH' region motif.

The protein belongs to the class-I aminoacyl-tRNA synthetase family. Monomer.

It localises to the cytoplasm. It catalyses the reaction tRNA(Arg) + L-arginine + ATP = L-arginyl-tRNA(Arg) + AMP + diphosphate. In Bacillus anthracis, this protein is Arginine--tRNA ligase 2 (argS2).